We begin with the raw amino-acid sequence, 258 residues long: Imidazole glycerol phosphate synthase subunit HisF (258 aa).

Active-site residues include D11 and D130.

Belongs to the HisA/HisF family. In terms of assembly, heterodimer of HisH and HisF.

The protein resides in the cytoplasm. The catalysed reaction is 5-[(5-phospho-1-deoxy-D-ribulos-1-ylimino)methylamino]-1-(5-phospho-beta-D-ribosyl)imidazole-4-carboxamide + L-glutamine = D-erythro-1-(imidazol-4-yl)glycerol 3-phosphate + 5-amino-1-(5-phospho-beta-D-ribosyl)imidazole-4-carboxamide + L-glutamate + H(+). The protein operates within amino-acid biosynthesis; L-histidine biosynthesis; L-histidine from 5-phospho-alpha-D-ribose 1-diphosphate: step 5/9. Functionally, IGPS catalyzes the conversion of PRFAR and glutamine to IGP, AICAR and glutamate. The HisF subunit catalyzes the cyclization activity that produces IGP and AICAR from PRFAR using the ammonia provided by the HisH subunit. The chain is Imidazole glycerol phosphate synthase subunit HisF from Xanthomonas oryzae pv. oryzae (strain MAFF 311018).